The chain runs to 1047 residues: [F-actin]-monooxygenase MICAL1 (1047 aa).

The segment at 1-489 (MASPTSTNPA…QDLYDIMDKE (489 aa)) is monooxygenase domain. FAD is bound by residues cysteine 95, 114–116 (EKR), 121–123 (RHN), phenylalanine 181, tyrosine 293, and aspartate 393. Phosphothreonine is present on threonine 475. The 105-residue stretch at 507–611 (SAGTEELLHW…YLSHFHSAFK (105 aa)) folds into the Calponin-homology (CH) domain. A Phosphoserine modification is found at serine 616. A disordered region spans residues 644-672 (RTKVEEETPCTEEPPVSEPSVPPALPSEH). A compositionally biased stretch (pro residues) spans 659 to 668 (VSEPSVPPAL). An LIM zinc-binding domain is found at 679–741 (DVCELCGKRL…LQHLPQEDQK (63 aa)). Residues cysteine 681, cysteine 684, histidine 702, cysteine 705, cysteine 708, cysteine 711, cysteine 731, and histidine 734 each contribute to the Zn(2+) site. 2 disordered regions span residues 739–787 (DQKE…QPAR) and 849–872 (EKGEEEEEEEEEEEEEEEELPPPL). Polar residues predominate over residues 745–767 (NNGSPENQELPTPGDSTTQSGPS). Serine 777 and serine 781 each carry phosphoserine. Positions 851 to 868 (GEEEEEEEEEEEEEEEEL) are enriched in acidic residues. The 143-residue stretch at 905–1047 (KEEEMKRFCK…EERRLREMPV (143 aa)) folds into the bMERB domain. Residues 912–996 (FCKAQAIQRR…LEEKQRQLDH (85 aa)) are a coiled coil.

Belongs to the Mical family. As to quaternary structure, interacts with STK38 and STK38L. Associates with the SH3 domain of NEDD9. Interacts with VIM and PLXNA3. Interacts with RAB1B, RAB8A, RAB10, RAB13 and RAB15 (in their GTP-bound forms); binding to RAB1B is of low affinity compared to other Rab proteins; at least in case of RAB8A and RAB10 can bind 2 molecules of the Rab proteins simultaneously. Interacts with GRAF1/ARHGAP26, GRAF2/ARHGAP10, RAB8A, RAB8B and RAB10; may bind simultaneously to GRAFs and Rabs and connects GRAFs to Rabs. Does not interact with RAB1 and RAB11A. FAD is required as a cofactor.

The protein resides in the cytoplasm. The protein localises to the cytoskeleton. It localises to the endosome membrane. Its subcellular location is the midbody. The enzyme catalyses L-methionyl-[F-actin] + NADPH + O2 + H(+) = L-methionyl-(R)-S-oxide-[F-actin] + NADP(+) + H2O. The catalysed reaction is NADPH + O2 + H(+) = H2O2 + NADP(+). Monooxygenase that promotes depolymerization of F-actin by mediating oxidation of specific methionine residues on actin to form methionine-sulfoxide, resulting in actin filament disassembly and preventing repolymerization. In the absence of actin, it also functions as a NADPH oxidase producing H(2)O(2). Acts as a cytoskeletal regulator that connects NEDD9 to intermediate filaments. Also acts as a negative regulator of apoptosis via its interaction with STK38 and STK38L; acts by antagonizing STK38 and STK38L activation by MST1/STK4. Involved in regulation of lamina-specific connectivity in the nervous system such as the development of lamina-restricted hippocampal connections. Through redox regulation of the actin cytoskeleton controls the intracellular distribution of secretory vesicles containing L1/neurofascin/NgCAM family proteins in neurons, thereby regulating their cell surface levels. May act as Rab effector protein and play a role in vesicle trafficking. Promotes endosomal tubule extension by associating with RAB8 (RAB8A or RAB8B), RAB10 and GRAF (GRAF1/ARHGAP26 or GRAF2/ARHGAP10) on the endosomal membrane which may connect GRAFs to Rabs, thereby participating in neosynthesized Rab8-Rab10-Rab11-dependent protein export. The polypeptide is [F-actin]-monooxygenase MICAL1 (Mical1) (Rattus norvegicus (Rat)).